Consider the following 365-residue polypeptide: D-alanine--D-alanine ligase (365 aa).

In terms of domain architecture, ATP-grasp spans 156 to 360 (KKLMAAEGLP…YAQLLDNLIE (205 aa)). 183-238 (KRELGLPVFVKPARGGSSIGISRVADWSEWDAALSLAREHDSKVIVEAEIVGVEVE) contacts ATP. Mg(2+)-binding residues include aspartate 315, glutamate 327, and asparagine 329.

It belongs to the D-alanine--D-alanine ligase family. Requires Mg(2+) as cofactor. It depends on Mn(2+) as a cofactor.

The protein resides in the cytoplasm. It catalyses the reaction 2 D-alanine + ATP = D-alanyl-D-alanine + ADP + phosphate + H(+). It functions in the pathway cell wall biogenesis; peptidoglycan biosynthesis. Its function is as follows. Cell wall formation. In Corynebacterium diphtheriae (strain ATCC 700971 / NCTC 13129 / Biotype gravis), this protein is D-alanine--D-alanine ligase.